The primary structure comprises 281 residues: Protein ZAR1-like 1.S (281 aa).

Residues 183-267 (QKYGFFQCKD…QDLCGRCKGQ (85 aa)) form a 3CxxC-type zinc finger.

It belongs to the ZAR1 family. In terms of assembly, component of a cytoplasmic ribonucleoprotein complex together with eif4enif1/4E-T and cpeb1. Expressed in oocytes.

The protein resides in the cytoplasm. The protein localises to the cytoplasmic ribonucleoprotein granule. Functionally, mRNA-binding protein required for maternal mRNA storage, translation and degradation during oocyte maturation. Controls timing of meiosis during oogenesis. Probably promotes formation of some phase-separated membraneless compartment that stores maternal mRNAs in oocytes: acts by undergoing liquid-liquid phase separation upon binding to maternal mRNAs. Binds to the 3'-UTR of maternal mRNAs, inhibiting their translation. This chain is Protein ZAR1-like 1.S, found in Xenopus laevis (African clawed frog).